Here is a 563-residue protein sequence, read N- to C-terminus: Membrane protein insertase YidC (563 aa).

A helical membrane pass occupies residues 1–21 (MDIKRTILIVALAIVTYVGVL). The disordered stretch occupies residues 43–62 (APGIPDTAAGTNGSASADVP). The next 5 helical transmembrane spans lie at 344-364 (LELT…FWLL), 370-390 (ILGN…GLFF), 440-460 (LGGC…YWVL), 471-491 (WILW…PIIM), and 518-538 (PIIF…YWVV).

This sequence belongs to the OXA1/ALB3/YidC family. Type 1 subfamily. Interacts with the Sec translocase complex via SecD. Specifically interacts with transmembrane segments of nascent integral membrane proteins during membrane integration.

The protein localises to the cell inner membrane. Functionally, required for the insertion and/or proper folding and/or complex formation of integral membrane proteins into the membrane. Involved in integration of membrane proteins that insert both dependently and independently of the Sec translocase complex, as well as at least some lipoproteins. Aids folding of multispanning membrane proteins. This chain is Membrane protein insertase YidC, found in Pseudomonas savastanoi pv. phaseolicola (strain 1448A / Race 6) (Pseudomonas syringae pv. phaseolicola (strain 1448A / Race 6)).